The following is a 408-amino-acid chain: Echinulin prenyltransferase 2 (408 aa).

Positions 94, 181, 183, 248, 250, 252, 334, 336, 400, and 404 each coordinate dimethylallyl diphosphate.

Belongs to the tryptophan dimethylallyltransferase family.

It carries out the reaction preechinulin + dimethylallyl diphosphate = tardioxopiperazine B + diphosphate. The enzyme catalyses preechinulin + dimethylallyl diphosphate = tardioxopiperazine A + diphosphate. It catalyses the reaction tardioxopiperazine A + dimethylallyl diphosphate = echinulin + diphosphate. The catalysed reaction is tardioxopiperazine A + dimethylallyl diphosphate = variecolorin L + diphosphate. It carries out the reaction neoechinulin A + dimethylallyl diphosphate = variecolorin G + diphosphate. The enzyme catalyses neoechinulin A + dimethylallyl diphosphate = isoechinulin A + diphosphate. It catalyses the reaction isoechinulin A + dimethylallyl diphosphate = dehydroechinulin + diphosphate. The catalysed reaction is neoechinulin B + dimethylallyl diphosphate = isoechinulin B + diphosphate. It participates in secondary metabolite biosynthesis. It functions in the pathway alkaloid biosynthesis. In terms of biological role, prenyltransferase; part of the gene cluster that mediates the biosynthesis of echinulin family alkaloid. The pathway begins with the biosynthesis of the cyclic dipeptide cyclo-L-Trp-L-Ala (cyclo-TA) by the NRPS echPS via condensation of L-alanine and L-tryptophan. The prenyltransferase echPT1 then catalyzes the first prenylation step, a reverse prenylation reaction at C2, to yield preechinulin. Preechinulin is the substrate of the cytochrome P450 monooxygenase echP450 that catalyzes the formation of the double bond between C10 and C11 to produce neoechulin A. The unique prenyltransferase echPT2 functions as a competitive enzyme with echP450 for preechinulin metabolization and uses preechinulin for effective regiospecific prenylations. Preechinulin is prenylated by echPT2 at C5 or C7. C7-prenylation leads to accumulation of tardioxopiperazine B without further modification by echPT2. In contrast, the C5-prenylated tardioxopiperazine A can be prenylated again by echPT2, predominantly at C7 to form echinulin or less frequently at C4 to give variecolorin L. EchPT2 also accepts neoechilunin A to produce varlecolorin G (prenylation at C5) or isoechinulin A (prenylation at C7). EchPT2 further converts isoechinulin A into dehydroechinulin. Moreover, a yet unidentified enzyme can also convert neoechilunin A into neoechilunin B by introducing a double bond between positions C14 and C17 and thus provides a further substrate to echPT2 for C5 and C7 prenylation. This is Echinulin prenyltransferase 2 from Aspergillus ruber (Eurotium rubrum).